The chain runs to 334 residues: UDP-N-acetylglucosamine--N-acetylmuramyl-(pentapeptide) pyrophosphoryl-undecaprenol N-acetylglucosamine transferase (334 aa).

Residues 11-13 (TGG), N125, S185, I229, and Q274 each bind UDP-N-acetyl-alpha-D-glucosamine.

The protein belongs to the glycosyltransferase 28 family. MurG subfamily.

Its subcellular location is the cell inner membrane. The catalysed reaction is di-trans,octa-cis-undecaprenyl diphospho-N-acetyl-alpha-D-muramoyl-L-alanyl-D-glutamyl-meso-2,6-diaminopimeloyl-D-alanyl-D-alanine + UDP-N-acetyl-alpha-D-glucosamine = di-trans,octa-cis-undecaprenyl diphospho-[N-acetyl-alpha-D-glucosaminyl-(1-&gt;4)]-N-acetyl-alpha-D-muramoyl-L-alanyl-D-glutamyl-meso-2,6-diaminopimeloyl-D-alanyl-D-alanine + UDP + H(+). Its pathway is cell wall biogenesis; peptidoglycan biosynthesis. Cell wall formation. Catalyzes the transfer of a GlcNAc subunit on undecaprenyl-pyrophosphoryl-MurNAc-pentapeptide (lipid intermediate I) to form undecaprenyl-pyrophosphoryl-MurNAc-(pentapeptide)GlcNAc (lipid intermediate II). This chain is UDP-N-acetylglucosamine--N-acetylmuramyl-(pentapeptide) pyrophosphoryl-undecaprenol N-acetylglucosamine transferase, found in Thermosipho melanesiensis (strain DSM 12029 / CIP 104789 / BI429).